The chain runs to 174 residues: MAAAMVPGRSESWERGEPGRPALYFCGSIRGGREDRTLYERIVSRLRRFGTVLTEHVAAAELGARGEEAAGGDRLIHEQDLEWLQQADVVVAEVTQPSLGVGYELGRAVAFNKRILCLFRPQSGRVLSAMIRGAADGSRFQVWDYEEGEVEALLDRYFEADPPGQVAASPDPTT.

Position 2 is an N-acetylalanine (Ala2). Gly27 lines the 5-hydroxymethyl-dUMP pocket. At Ser28 the chain carries Phosphoserine. 6 residues coordinate 5-hydroxymethyl-dUMP: Ile29, Arg30, Gly31, Ser98, Gly100, and Glu104. Residue Ser98 is modified to Phosphoserine. 4 positions are modified to phosphoserine: Ser123, Ser128, Ser138, and Ser169. Ser128 is a binding site for 5-hydroxymethyl-dUMP.

This sequence belongs to the 2'-deoxynucleoside 5'-phosphate N-hydrolase 1 family. As to quaternary structure, monomer and homodimer. Expressed at low levels in brain, colon, lung, peripheral blood leukocytes, placenta, small intestine, and thymus. Expressed at high levels in heart, kidney, liver, skeletal muscle and spleen. Overexpressed in a significant proportion of breast cancers.

The protein resides in the cytoplasm. It localises to the nucleus. The catalysed reaction is 5-hydroxymethyl-dUMP + H2O = 5-hydroxymethyluracil + 2-deoxy-D-ribose 5-phosphate. With respect to regulation, inhibited by AMP and GMP. Part of a nucleotide salvage pathway that eliminates epigenetically modified 5-hydroxymethyl-dCMP (hmdCMP) in a two-step process entailing deamination to cytotoxic 5-hydroxymethyl-dUMP (hmdUMP), followed by its hydrolysis into 5-hydroxymethyluracil (hmU) and 2-deoxy-D-ribose 5-phosphate (deoxyribosephosphate). Catalyzes the second step in that pathway, the hydrolysis of the N-glycosidic bond in hmdUMP, degrading this cytotoxic nucleotide to avoid its genomic integration. This is 5-hydroxymethyl-dUMP N-hydrolase from Homo sapiens (Human).